The sequence spans 807 residues: Zinc finger protein 594 (807 aa).

Residues 1-23 (MKEWKSKMEISEEKKSARAASEK) form a disordered region. 8 consecutive C2H2-type zinc fingers follow at residues 127–149 (YECK…QRIH), 155–177 (YVCN…QRIH), 183–205 (YICH…KQIH), 211–233 (YECK…QRIH), 239–261 (YLCN…HRIH), 267–289 (YECY…QRIH), 295–317 (LKCN…QRLH), and 323–345 (YECH…QRLH). The C2H2-type 9; degenerate zinc finger occupies 348 to 370 (EKIEECEKTFSKDEELREEQRIH). 6 consecutive C2H2-type zinc fingers follow at residues 376–398 (YWCN…QVTH), 404–426 (YECK…HRIH), 432–454 (CVCS…HRVH), 460–482 (YECS…QKIH), 488–510 (YQCT…RRIH), and 516–538 (YECK…QSLH). The C2H2-type 16; degenerate zinc finger occupies 543–562 (LECEKTFSQDEELRGEQKIH). C2H2-type zinc fingers lie at residues 568 to 590 (YWCN…QVTH), 596 to 618 (YECK…HRIH), 624 to 646 (YVCN…HRIH), 652 to 674 (YECS…QKIH), 680 to 702 (YQCS…RRLH), and 708 to 730 (YECK…QRLH). Residues 733–755 (EKLEECEKTFSKDEELRKEQRTH) form a C2H2-type 23; degenerate zinc finger. The C2H2-type 24 zinc-finger motif lies at 761 to 783 (YWCNQCSRTFQGSSDLIRHQVTH).

Belongs to the krueppel C2H2-type zinc-finger protein family.

The protein resides in the nucleus. Its function is as follows. May be involved in transcriptional regulation. The chain is Zinc finger protein 594 (ZNF594) from Homo sapiens (Human).